Consider the following 809-residue polypeptide: BTB/POZ domain-containing protein At2g30600 (809 aa).

BTB domains are found at residues Ser-211 to Glu-273 and Ser-351 to Asp-420. One can recognise a BACK domain in the interval Val-466–Ser-537.

It participates in protein modification; protein ubiquitination. Its function is as follows. May act as a substrate-specific adapter of an E3 ubiquitin-protein ligase complex (CUL3-RBX1-BTB) which mediates the ubiquitination and subsequent proteasomal degradation of target proteins. The protein is BTB/POZ domain-containing protein At2g30600 of Arabidopsis thaliana (Mouse-ear cress).